The primary structure comprises 515 residues: Galactose/methyl galactoside import ATP-binding protein MglA (515 aa).

2 ABC transporter domains span residues L8–E243 and I254–L499. Position 40–47 (G40–S47) interacts with ATP.

Belongs to the ABC transporter superfamily. Galactose/methyl galactoside importer (TC 3.A.1.2.3) family. In terms of assembly, the complex is composed of one ATP-binding protein (MglA), two transmembrane proteins (MglC) and a solute-binding protein (MglB).

The protein resides in the cell membrane. It catalyses the reaction D-galactose(out) + ATP + H2O = D-galactose(in) + ADP + phosphate + H(+). The catalysed reaction is methyl beta-D-galactoside(out) + ATP + H2O = methyl beta-D-galactoside(in) + ADP + phosphate + H(+). In terms of biological role, part of the ABC transporter complex MglABC involved in galactose/methyl galactoside import. Responsible for energy coupling to the transport system. In Clostridium perfringens (strain 13 / Type A), this protein is Galactose/methyl galactoside import ATP-binding protein MglA.